Reading from the N-terminus, the 156-residue chain is SsrA-binding protein (156 aa).

Belongs to the SmpB family.

It localises to the cytoplasm. Required for rescue of stalled ribosomes mediated by trans-translation. Binds to transfer-messenger RNA (tmRNA), required for stable association of tmRNA with ribosomes. tmRNA and SmpB together mimic tRNA shape, replacing the anticodon stem-loop with SmpB. tmRNA is encoded by the ssrA gene; the 2 termini fold to resemble tRNA(Ala) and it encodes a 'tag peptide', a short internal open reading frame. During trans-translation Ala-aminoacylated tmRNA acts like a tRNA, entering the A-site of stalled ribosomes, displacing the stalled mRNA. The ribosome then switches to translate the ORF on the tmRNA; the nascent peptide is terminated with the 'tag peptide' encoded by the tmRNA and targeted for degradation. The ribosome is freed to recommence translation, which seems to be the essential function of trans-translation. This chain is SsrA-binding protein, found in Desulfitobacterium hafniense (strain DSM 10664 / DCB-2).